Consider the following 193-residue polypeptide: Ribosomal RNA large subunit methyltransferase E (193 aa).

Positions 51, 53, 69, 85, and 108 each coordinate S-adenosyl-L-methionine. K148 functions as the Proton acceptor in the catalytic mechanism.

This sequence belongs to the class I-like SAM-binding methyltransferase superfamily. RNA methyltransferase RlmE family.

The protein localises to the cytoplasm. It carries out the reaction uridine(2552) in 23S rRNA + S-adenosyl-L-methionine = 2'-O-methyluridine(2552) in 23S rRNA + S-adenosyl-L-homocysteine + H(+). In terms of biological role, specifically methylates the uridine in position 2552 of 23S rRNA at the 2'-O position of the ribose in the fully assembled 50S ribosomal subunit. The polypeptide is Ribosomal RNA large subunit methyltransferase E (Methanoregula boonei (strain DSM 21154 / JCM 14090 / 6A8)).